Consider the following 100-residue polypeptide: Urease subunit gamma (100 aa).

Belongs to the urease gamma subunit family. As to quaternary structure, heterotrimer of UreA (gamma), UreB (beta) and UreC (alpha) subunits. Three heterotrimers associate to form the active enzyme.

Its subcellular location is the cytoplasm. The enzyme catalyses urea + 2 H2O + H(+) = hydrogencarbonate + 2 NH4(+). The protein operates within nitrogen metabolism; urea degradation; CO(2) and NH(3) from urea (urease route): step 1/1. This chain is Urease subunit gamma, found in Kocuria rhizophila (strain ATCC 9341 / DSM 348 / NBRC 103217 / DC2201).